The following is a 274-amino-acid chain: Actin-binding protein Smlt3054 (274 aa).

ANK repeat units lie at residues serine 192–alanine 221 and histidine 225–glutamine 254. Residues asparagine 251–leucine 274 are disordered.

In terms of assembly, exists as a dimer as well as a higher order oligomer.

Its subcellular location is the secreted. The protein resides in the periplasm. Directly binds F-actin, which results in thickened and distorted F-actin fibers, and affects cellular F-actin localization. Thus, may be a host effector whose function is to disrupt host actin cytoskeletal structure, which may enhance invasion. This chain is Actin-binding protein Smlt3054, found in Stenotrophomonas maltophilia (strain K279a).